We begin with the raw amino-acid sequence, 320 residues long: Polyprenyl transferase pyr6 (320 aa).

6 consecutive transmembrane segments (helical) span residues 22-42 (KYNCLFAIFPGVWSIFLAAAS), 60-80 (GLAFAYTYLLSGAGMVWNDWI), 101-121 (LATRAAIIWMLVQYAASVWLM), 127-147 (GQNLWTFMLPLTTGIILYPFG), 155-175 (LGIYPQYILGASSALTILPAW), and 186-206 (PDLLAKCLPLCVFLFLWTIYF). An N-linked (GlcNAc...) asparagine glycan is attached at Asn-224. The helical transmembrane segment at 233 to 253 (YVHGLLLLQAVAVVMVIPWIL) threads the bilayer. An N-linked (GlcNAc...) asparagine glycan is attached at Asn-256. 2 helical membrane-spanning segments follow: residues 260 to 280 (WLWFSWLGVWTAALAEQLYLF) and 296 to 316 (FALGIWNVLACFVELLLVSGS).

The protein belongs to the UbiA prenyltransferase family. The cofactor is Mg(2+).

The protein localises to the membrane. It catalyses the reaction 4-hydroxy-6-(pyridin-3-yl)-2H-pyran-2-one + (2E,6E)-farnesyl diphosphate = 4-hydroxy-3-[(2E,6E)-farnesyl]-6-(pyridin-3-yl)-2H-pyran-2-one + diphosphate. It functions in the pathway secondary metabolite biosynthesis; terpenoid biosynthesis. In terms of biological role, polyprenyl transferase; part of the gene cluster that mediates the biosynthesis of pyripyropene A, a specific human acyl-coenzyme A:cholesterol acyltransferase 2 inhibitor. The first step of the pathway is the synthesis of nicotinyl-CoA from nicotinic acid by the nicotinic acid-CoA ligase pyr1. Nicotinyl-CoA is then a substrate of polyketide synthase pyr2 to produce 4-hydroxy-6-(3-pyridinyl)-2H-pyran-2-one (HPPO) which is further prenylated by the polyprenyl transferase pyr6 to yield farnesyl-HPPO. The next steps consist of an epoxidation of farnesyl-HPPO to epoxyfarnesyl-HPPO by FAD-dependent monooxygenase pyr5 and a cyclization of the terpenoid portion by the terpene cyclase pyr4 to yield deacetyl-pyripyropene E. The 2 cytochrome P450 monooxygenases pyr3 and pyr9, and the 2 acetyltransferases pyr7 and pyr8 are involved in the conversion of deacetyl-pyripyropene E into pyripyropene A through several cycles of oxidation and acetylation steps. Pyr7 acetylates deacetyl-pyripyropene E to pyripyropene E which is oxidized to 11-deacetyl-pyripyropene O by pyr3, which is in turn acetylated into pyripyropene O by pyr8. Pyripyropene O is then oxidized to deacetyl-pyripyropene A by pyr9. Deacetyl-pyripyropene A is finally acetylated to pyripyropene A by pyr8. In Aspergillus fumigatus (strain ATCC MYA-4609 / CBS 101355 / FGSC A1100 / Af293) (Neosartorya fumigata), this protein is Polyprenyl transferase pyr6.